Here is a 301-residue protein sequence, read N- to C-terminus: Putative S-adenosyl-L-methionine-dependent methyltransferase MAP_3777 (301 aa).

Residues Asp126 and 155–156 (DL) each bind S-adenosyl-L-methionine.

Belongs to the UPF0677 family.

Its function is as follows. Exhibits S-adenosyl-L-methionine-dependent methyltransferase activity. This Mycolicibacterium paratuberculosis (strain ATCC BAA-968 / K-10) (Mycobacterium paratuberculosis) protein is Putative S-adenosyl-L-methionine-dependent methyltransferase MAP_3777.